The primary structure comprises 173 residues: Shikimate kinase (173 aa).

Position 10 to 15 (10 to 15 (GSGKTT)) interacts with ATP. Thr-14 contacts Mg(2+). Positions 32, 56, and 78 each coordinate substrate. Arg-117 is a binding site for ATP. Substrate is bound at residue Arg-135.

Belongs to the shikimate kinase family. In terms of assembly, monomer. It depends on Mg(2+) as a cofactor.

It is found in the cytoplasm. It carries out the reaction shikimate + ATP = 3-phosphoshikimate + ADP + H(+). It participates in metabolic intermediate biosynthesis; chorismate biosynthesis; chorismate from D-erythrose 4-phosphate and phosphoenolpyruvate: step 5/7. Functionally, catalyzes the specific phosphorylation of the 3-hydroxyl group of shikimic acid using ATP as a cosubstrate. In Limosilactobacillus fermentum (strain NBRC 3956 / LMG 18251) (Lactobacillus fermentum), this protein is Shikimate kinase.